A 191-amino-acid polypeptide reads, in one-letter code: uncharacterized protein (191 aa).

This is an uncharacterized protein from Acanthamoeba polyphaga (Amoeba).